The chain runs to 224 residues: Ribosomal RNA small subunit methyltransferase G (224 aa).

Residues G92, L97, 143–144, and R156 contribute to the S-adenosyl-L-methionine site; that span reads VE.

It belongs to the methyltransferase superfamily. RNA methyltransferase RsmG family.

The protein localises to the cytoplasm. The catalysed reaction is guanosine(527) in 16S rRNA + S-adenosyl-L-methionine = N(7)-methylguanosine(527) in 16S rRNA + S-adenosyl-L-homocysteine. Functionally, specifically methylates the N7 position of guanine in position 527 of 16S rRNA. This Albidiferax ferrireducens (strain ATCC BAA-621 / DSM 15236 / T118) (Rhodoferax ferrireducens) protein is Ribosomal RNA small subunit methyltransferase G.